The chain runs to 266 residues: RNA-binding protein 7 (266 aa).

Gly2 is modified (N-acetylglycine). One can recognise an RRM domain in the interval 10–87 (RTLFVGNLET…RPIKIQFRSG (78 aa)). 2 ZCCHC8 binding regions span residues 25–35 (LLFELFHQAGP) and 59–76 (HEVS…IKLY). Polar residues predominate over residues 90–115 (HAPQDVSLSYPQHHVGNSSPTSTSPS). Residues 90–118 (HAPQDVSLSYPQHHVGNSSPTSTSPSRYE) are disordered. Phosphoserine occurs at positions 136 and 137. Arg152 carries the omega-N-methylarginine modification. The tract at residues 162–266 (SSPLDQSGFS…RDGKWRSSRH (105 aa)) is disordered. Positions 173–188 (SVQSHSHSFNQSSSSQ) are enriched in low complexity. Residue Ser204 is modified to Phosphoserine. The segment covering 209–266 (ADRHYSREQRYTDHGSDHHYRGKRDDFFYEDRNHDDWSHDYDNRRDSSRDGKWRSSRH) has biased composition (basic and acidic residues).

Component of the nuclear exosome targeting (NEXT) complex composed of MTREX, ZCCHC8, and RBM7 that directs a subset of non-coding short-lived RNAs for exosomal degradation. Interacts with ZCCHC8 and SF3B2/SAP145. Binds to MTREX through ZCCHC8. Interacts with YWHAE and YWHAZ; these interactions are stress-dependent and RBM7 phosphorylation dependent; release RNA from the NEXT complex and may affect RNA targeting to the nuclear RNA exosomome for degradation. Interacts with MEPCE and LARP7, the core subunits of 7SK snRNP; upon genotoxic stress this interaction is enhanced, triggering the release of inactive P-TEFb complex from the core and P-TEFb complex activation. In terms of processing, phosphorylated at Ser-136 by MAPK14/p38-alpha-activated MAPKAPK2/MK2; this phosphorylation is stress-dependent; this phosphorylation decreases its RNA-binding capacity therefore affecting RNA nuclear exosome-mediated degradation. This phosphorylation mediates YWHAE and YWHAZ interactions. Ubiquitous.

The protein resides in the nucleus. The protein localises to the nucleoplasm. RNA-binding subunit of the trimeric nuclear exosome targeting (NEXT) complex, a complex that functions as an RNA exosome cofactor that directs a subset of non-coding short-lived RNAs for exosomal degradation. NEXT is involved in surveillance and turnover of aberrant transcripts and non-coding RNAs. Binds preferentially polyuridine sequences and associates with newly synthesized RNAs, including pre-mRNAs and short-lived exosome substrates such as promoter upstream transcripts (PROMPTs), enhancer RNAs (eRNAs), and 3'-extended products from small nuclear RNAs (snRNAs). Participates in several biological processes including DNA damage response (DDR) and stress response. During stress response, activation of the p38MAPK-MK2 pathway decreases RBM7-RNA-binding and subsequently the RNA exosome degradation activities, thereby modulating the turnover of non-coding transcriptome. Participates in DNA damage response (DDR), through its interaction with MEPCE and LARP7, the core subunits of 7SK snRNP complex, that release the positive transcription elongation factor b (P-TEFb) complex from the 7SK snRNP. In turn, activation of P-TEFb complex induces the transcription of P-TEFb-dependent DDR genes to promote cell viability. In Homo sapiens (Human), this protein is RNA-binding protein 7.